The following is a 231-amino-acid chain: MSEIKDVIVQGLWKNNSALVQLLGLCPLLAVTSTATNALGLGLATTLVLTLTNLTISTLRHWTPAEIRIPIYVMIIASVVSAVQMLINAYAFGLYQSLGIFIPLIVTNCIVVGRAEAFAAKKGPALSALDGFSIGMGATCAMFVLGSLREIIGNGTLFDGADALLGSWAKVLRVEIFHTDSPFLLAMLPPGAFIGLGLMLAGKYLIDEKMKKRRTEAAAERALPNGETGNV.

The next 6 membrane-spanning stretches (helical) occupy residues 18–38, 39–59, 63–83, 86–106, 125–145, and 182–202; these read ALVQ…ATNA, LGLG…ISTL, TPAE…VSAV, LINA…PLIV, ALSA…MFVL, and PFLL…MLAG.

The protein belongs to the NqrDE/RnfAE family. The complex is composed of six subunits: RsxA, RsxB, RsxC, RsxD, RsxE and RsxG.

The protein localises to the cell inner membrane. Its function is as follows. Part of a membrane-bound complex that couples electron transfer with translocation of ions across the membrane. Required to maintain the reduced state of SoxR. The chain is Ion-translocating oxidoreductase complex subunit E from Escherichia coli O127:H6 (strain E2348/69 / EPEC).